Reading from the N-terminus, the 141-residue chain is Small ribosomal subunit protein uS8c (141 aa).

It belongs to the universal ribosomal protein uS8 family. As to quaternary structure, part of the 30S ribosomal subunit.

The protein resides in the plastid. It localises to the chloroplast. Its function is as follows. One of the primary rRNA binding proteins, it binds directly to 16S rRNA central domain where it helps coordinate assembly of the platform of the 30S subunit. The chain is Small ribosomal subunit protein uS8c (rps8) from Chlamydomonas reinhardtii (Chlamydomonas smithii).